The chain runs to 323 residues: Aldo-keto reductase family 1 member C18 (323 aa).

NADP(+)-binding positions include 20–24 (GFGTY) and Asp-50. Tyr-55 acts as the Proton donor in catalysis. His-117 is a binding site for substrate. Residues 166–167 (SN), Gln-190, 216–221 (YGALGT), and 270–280 (KSFNEERIREN) contribute to the NADP(+) site.

This sequence belongs to the aldo/keto reductase family. Monomer. Post-translationally, the N-terminus is blocked. In terms of tissue distribution, corpus luteum (large luteal cells).

It is found in the cytoplasm. It catalyses the reaction (17R,20S)-17,20-dihydroxypregn-4-en-3-one + NADP(+) = 17alpha-hydroxyprogesterone + NADPH + H(+). The catalysed reaction is (17R,20S)-17,20-dihydroxypregn-4-en-3-one + NAD(+) = 17alpha-hydroxyprogesterone + NADH + H(+). Functionally, catalyzes the conversion of progesterone into 20-alpha-dihydroprogesterone (20 alpha-OHP). This Rattus norvegicus (Rat) protein is Aldo-keto reductase family 1 member C18 (Akr1c18).